Here is a 435-residue protein sequence, read N- to C-terminus: Minor fimbrial subunit HifE (435 aa).

The signal sequence occupies residues 1-31 (MKTLTTYAKYFTPISKIAFLFCFLMGNIAEA).

Belongs to the fimbrial protein family.

It is found in the fimbrium. In terms of biological role, may be a minor structural protein required for pilus biogenesis. May be the adhesive component in the pili. The polypeptide is Minor fimbrial subunit HifE (hifE) (Haemophilus influenzae).